The chain runs to 171 residues: 3-hydroxydecanoyl-[acyl-carrier-protein] dehydratase (171 aa).

Residue H70 is part of the active site.

Belongs to the thioester dehydratase family. FabA subfamily. Homodimer.

It localises to the cytoplasm. It carries out the reaction a (3R)-hydroxyacyl-[ACP] = a (2E)-enoyl-[ACP] + H2O. The enzyme catalyses (3R)-hydroxydecanoyl-[ACP] = (2E)-decenoyl-[ACP] + H2O. The catalysed reaction is (2E)-decenoyl-[ACP] = (3Z)-decenoyl-[ACP]. It participates in lipid metabolism; fatty acid biosynthesis. Necessary for the introduction of cis unsaturation into fatty acids. Catalyzes the dehydration of (3R)-3-hydroxydecanoyl-ACP to E-(2)-decenoyl-ACP and then its isomerization to Z-(3)-decenoyl-ACP. Can catalyze the dehydratase reaction for beta-hydroxyacyl-ACPs with saturated chain lengths up to 16:0, being most active on intermediate chain length. The polypeptide is 3-hydroxydecanoyl-[acyl-carrier-protein] dehydratase (Pseudomonas putida (strain ATCC 700007 / DSM 6899 / JCM 31910 / BCRC 17059 / LMG 24140 / F1)).